The primary structure comprises 425 residues: Proline--tRNA ligase (425 aa).

Belongs to the class-II aminoacyl-tRNA synthetase family. ProS type 2 subfamily. In terms of assembly, homodimer.

The protein resides in the cytoplasm. It carries out the reaction tRNA(Pro) + L-proline + ATP = L-prolyl-tRNA(Pro) + AMP + diphosphate. Its function is as follows. Catalyzes the attachment of proline to tRNA(Pro) in a two-step reaction: proline is first activated by ATP to form Pro-AMP and then transferred to the acceptor end of tRNA(Pro). This is Proline--tRNA ligase from Wolbachia sp. subsp. Brugia malayi (strain TRS).